Reading from the N-terminus, the 137-residue chain is Nucleoside diphosphate kinase (137 aa).

ATP-binding residues include K9, F57, R85, T91, R102, and N112. The active-site Pros-phosphohistidine intermediate is the H115.

The protein belongs to the NDK family. As to quaternary structure, homotetramer. Mg(2+) is required as a cofactor.

It localises to the cytoplasm. It catalyses the reaction a 2'-deoxyribonucleoside 5'-diphosphate + ATP = a 2'-deoxyribonucleoside 5'-triphosphate + ADP. The catalysed reaction is a ribonucleoside 5'-diphosphate + ATP = a ribonucleoside 5'-triphosphate + ADP. In terms of biological role, major role in the synthesis of nucleoside triphosphates other than ATP. The ATP gamma phosphate is transferred to the NDP beta phosphate via a ping-pong mechanism, using a phosphorylated active-site intermediate. This Geobacter sp. (strain M21) protein is Nucleoside diphosphate kinase.